A 267-amino-acid chain; its full sequence is Phosphatidylserine decarboxylase proenzyme (267 aa).

Catalysis depends on charge relay system; for autoendoproteolytic cleavage activity residues Asp-78, His-132, and Ser-236. Residue Ser-236 is the Schiff-base intermediate with substrate; via pyruvic acid; for decarboxylase activity of the active site. At Ser-236 the chain carries Pyruvic acid (Ser); by autocatalysis.

This sequence belongs to the phosphatidylserine decarboxylase family. PSD-B subfamily. Prokaryotic type I sub-subfamily. Heterodimer of a large membrane-associated beta subunit and a small pyruvoyl-containing alpha subunit. The cofactor is pyruvate. In terms of processing, is synthesized initially as an inactive proenzyme. Formation of the active enzyme involves a self-maturation process in which the active site pyruvoyl group is generated from an internal serine residue via an autocatalytic post-translational modification. Two non-identical subunits are generated from the proenzyme in this reaction, and the pyruvate is formed at the N-terminus of the alpha chain, which is derived from the carboxyl end of the proenzyme. The autoendoproteolytic cleavage occurs by a canonical serine protease mechanism, in which the side chain hydroxyl group of the serine supplies its oxygen atom to form the C-terminus of the beta chain, while the remainder of the serine residue undergoes an oxidative deamination to produce ammonia and the pyruvoyl prosthetic group on the alpha chain. During this reaction, the Ser that is part of the protease active site of the proenzyme becomes the pyruvoyl prosthetic group, which constitutes an essential element of the active site of the mature decarboxylase.

Its subcellular location is the cell membrane. The catalysed reaction is a 1,2-diacyl-sn-glycero-3-phospho-L-serine + H(+) = a 1,2-diacyl-sn-glycero-3-phosphoethanolamine + CO2. Its pathway is phospholipid metabolism; phosphatidylethanolamine biosynthesis; phosphatidylethanolamine from CDP-diacylglycerol: step 2/2. Its function is as follows. Catalyzes the formation of phosphatidylethanolamine (PtdEtn) from phosphatidylserine (PtdSer). This Helicobacter pylori (strain J99 / ATCC 700824) (Campylobacter pylori J99) protein is Phosphatidylserine decarboxylase proenzyme.